We begin with the raw amino-acid sequence, 372 residues long: Carbamoyl phosphate synthase small chain (372 aa).

The interval 1–186 is CPSase; it reads MTYCKRGTEG…IHQNNSPDII (186 aa). Residues Ser-52, Gly-233, and Gly-235 each coordinate L-glutamine. The Glutamine amidotransferase type-1 domain maps to 185–372; that stretch reads IIVLVDCGIK…KKMVIKDEGN (188 aa). Cys-261 acts as the Nucleophile in catalysis. Positions 262, 265, 303, 305, and 306 each coordinate L-glutamine. Residues His-345 and Glu-347 contribute to the active site.

The protein belongs to the CarA family. In terms of assembly, composed of two chains; the small (or glutamine) chain promotes the hydrolysis of glutamine to ammonia, which is used by the large (or ammonia) chain to synthesize carbamoyl phosphate. Tetramer of heterodimers (alpha,beta)4.

The enzyme catalyses hydrogencarbonate + L-glutamine + 2 ATP + H2O = carbamoyl phosphate + L-glutamate + 2 ADP + phosphate + 2 H(+). It carries out the reaction L-glutamine + H2O = L-glutamate + NH4(+). It functions in the pathway amino-acid biosynthesis; L-arginine biosynthesis; carbamoyl phosphate from bicarbonate: step 1/1. The protein operates within pyrimidine metabolism; UMP biosynthesis via de novo pathway; (S)-dihydroorotate from bicarbonate: step 1/3. Its function is as follows. Small subunit of the glutamine-dependent carbamoyl phosphate synthetase (CPSase). CPSase catalyzes the formation of carbamoyl phosphate from the ammonia moiety of glutamine, carbonate, and phosphate donated by ATP, constituting the first step of 2 biosynthetic pathways, one leading to arginine and/or urea and the other to pyrimidine nucleotides. The small subunit (glutamine amidotransferase) binds and cleaves glutamine to supply the large subunit with the substrate ammonia. This Metallosphaera sedula (strain ATCC 51363 / DSM 5348 / JCM 9185 / NBRC 15509 / TH2) protein is Carbamoyl phosphate synthase small chain.